The sequence spans 331 residues: Biotin synthase (331 aa).

The Radical SAM core domain occupies 53 to 271 (TELQLSQLLS…IAVARIVCPK (219 aa)). Cys68, Cys72, and Cys75 together coordinate [4Fe-4S] cluster. Residues Cys112, Cys143, Cys203, and Arg275 each coordinate [2Fe-2S] cluster.

Belongs to the radical SAM superfamily. Biotin synthase family. As to quaternary structure, homodimer. The cofactor is [4Fe-4S] cluster. [2Fe-2S] cluster serves as cofactor.

The enzyme catalyses (4R,5S)-dethiobiotin + (sulfur carrier)-SH + 2 reduced [2Fe-2S]-[ferredoxin] + 2 S-adenosyl-L-methionine = (sulfur carrier)-H + biotin + 2 5'-deoxyadenosine + 2 L-methionine + 2 oxidized [2Fe-2S]-[ferredoxin]. The protein operates within cofactor biosynthesis; biotin biosynthesis; biotin from 7,8-diaminononanoate: step 2/2. Its function is as follows. Catalyzes the conversion of dethiobiotin (DTB) to biotin by the insertion of a sulfur atom into dethiobiotin via a radical-based mechanism. The protein is Biotin synthase of Phenylobacterium zucineum (strain HLK1).